The chain runs to 583 residues: Aspartate--tRNA ligase (583 aa).

Glutamate 173 is a binding site for L-aspartate. The segment at 197-200 (QLFK) is aspartate. An L-aspartate-binding site is contributed by arginine 219. ATP contacts are provided by residues 219–221 (RDE) and glutamine 228. L-aspartate is bound at residue histidine 444. Position 478 (glutamate 478) interacts with ATP. Arginine 485 is a binding site for L-aspartate. 530–533 (GLDR) is an ATP binding site.

It belongs to the class-II aminoacyl-tRNA synthetase family. Type 1 subfamily. As to quaternary structure, homodimer.

The protein localises to the cytoplasm. It catalyses the reaction tRNA(Asp) + L-aspartate + ATP = L-aspartyl-tRNA(Asp) + AMP + diphosphate. Its function is as follows. Catalyzes the attachment of L-aspartate to tRNA(Asp) in a two-step reaction: L-aspartate is first activated by ATP to form Asp-AMP and then transferred to the acceptor end of tRNA(Asp). The sequence is that of Aspartate--tRNA ligase from Azobacteroides pseudotrichonymphae genomovar. CFP2.